Consider the following 87-residue polypeptide: Small ribosomal subunit protein uS17 (87 aa).

It belongs to the universal ribosomal protein uS17 family. In terms of assembly, part of the 30S ribosomal subunit.

Its function is as follows. One of the primary rRNA binding proteins, it binds specifically to the 5'-end of 16S ribosomal RNA. This chain is Small ribosomal subunit protein uS17, found in Heliobacterium modesticaldum (strain ATCC 51547 / Ice1).